A 645-amino-acid polypeptide reads, in one-letter code: ATP-dependent zinc metalloprotease FtsH (645 aa).

Residues 1-8 (MDFNREHK) lie on the Cytoplasmic side of the membrane. A helical transmembrane segment spans residues 9-29 (INFLYVLAAMVGVLLIQSLVS). Residues 30–105 (QPDHIRTIPY…FSGEPEPGPW (76 aa)) are Periplasmic-facing. The chain crosses the membrane as a helical span at residues 106-126 (PTILGWLMPIVGFALVWMFLI). Residues 127–645 (RPMSMGPGMD…ALTVEGGEAQ (519 aa)) are Cytoplasmic-facing. 199 to 206 (GPPGTGKT) serves as a coordination point for ATP. A Zn(2+)-binding site is contributed by His-423. Residue Glu-424 is part of the active site. Residues His-427 and Asp-500 each coordinate Zn(2+). Residues 612–645 (SASVLRDGGDGAADAGQDRSGEHRALTVEGGEAQ) are disordered. Residues 627-637 (GQDRSGEHRAL) show a composition bias toward basic and acidic residues.

This sequence in the central section; belongs to the AAA ATPase family. It in the C-terminal section; belongs to the peptidase M41 family. In terms of assembly, homohexamer. The cofactor is Zn(2+).

Its subcellular location is the cell inner membrane. In terms of biological role, acts as a processive, ATP-dependent zinc metallopeptidase for both cytoplasmic and membrane proteins. Plays a role in the quality control of integral membrane proteins. This Paraburkholderia phymatum (strain DSM 17167 / CIP 108236 / LMG 21445 / STM815) (Burkholderia phymatum) protein is ATP-dependent zinc metalloprotease FtsH.